A 120-amino-acid chain; its full sequence is V-type proton ATPase subunit F (120 aa).

Belongs to the V-ATPase F subunit family. As to quaternary structure, V-ATPase is a heteromultimeric enzyme composed of a peripheral catalytic V1 complex (components A to H) attached to an integral membrane V0 proton pore complex (components: a, c, c', c'' and d).

In terms of biological role, subunit of the peripheral V1 complex of vacuolar ATPase essential for assembly or catalytic function. V-ATPase is responsible for acidifying a variety of intracellular compartments in eukaryotic cells. In Dictyostelium discoideum (Social amoeba), this protein is V-type proton ATPase subunit F (vatF).